The sequence spans 112 residues: uncharacterized protein (112 aa).

The interval 1–27 is disordered; the sequence is MIASIGDSAEPPLRRTRRAQQQDRPPT.

This is an uncharacterized protein from Orgyia pseudotsugata multicapsid polyhedrosis virus (OpMNPV).